A 397-amino-acid polypeptide reads, in one-letter code: Iron-sulfur cluster assembly SufBD family protein Rv1462 (397 aa).

Residue T2 is modified to N-acetylthreonine.

It belongs to the iron-sulfur cluster assembly SufBD family.

This chain is Iron-sulfur cluster assembly SufBD family protein Rv1462, found in Mycobacterium tuberculosis (strain ATCC 25618 / H37Rv).